The primary structure comprises 273 residues: Thiazole synthase (273 aa).

Catalysis depends on lysine 110, which acts as the Schiff-base intermediate with DXP. 1-deoxy-D-xylulose 5-phosphate-binding positions include glycine 171, 197 to 198 (AG), and 219 to 220 (NT). A disordered region spans residues 251–273 (MAAQDSAQPSTPVLGTPFWHHAP).

It belongs to the ThiG family. Homotetramer. Forms heterodimers with either ThiH or ThiS.

The protein localises to the cytoplasm. It carries out the reaction [ThiS sulfur-carrier protein]-C-terminal-Gly-aminoethanethioate + 2-iminoacetate + 1-deoxy-D-xylulose 5-phosphate = [ThiS sulfur-carrier protein]-C-terminal Gly-Gly + 2-[(2R,5Z)-2-carboxy-4-methylthiazol-5(2H)-ylidene]ethyl phosphate + 2 H2O + H(+). The protein operates within cofactor biosynthesis; thiamine diphosphate biosynthesis. Its function is as follows. Catalyzes the rearrangement of 1-deoxy-D-xylulose 5-phosphate (DXP) to produce the thiazole phosphate moiety of thiamine. Sulfur is provided by the thiocarboxylate moiety of the carrier protein ThiS. In vitro, sulfur can be provided by H(2)S. This Variovorax paradoxus (strain S110) protein is Thiazole synthase.